The sequence spans 259 residues: UPF0246 protein PputW619_0896 (259 aa).

The protein belongs to the UPF0246 family.

In Pseudomonas putida (strain W619), this protein is UPF0246 protein PputW619_0896.